Here is a 380-residue protein sequence, read N- to C-terminus: Tomoregulin-1 (380 aa).

A signal peptide spans 1-39; the sequence is MGAAAAEAPLRLPAAPPLAFCCYTSVLLLFAFSLPGSRA. The Extracellular segment spans residues 40 to 330; sequence SNQPPGGGGG…VPSRQKLTHV (291 aa). 2 consecutive Kazal-like domains span residues 98 to 145 and 189 to 237; these read ACQF…PCYS and VCNI…HCTD. Disulfide bonds link cysteine 99–cysteine 129, cysteine 103–cysteine 122, cysteine 111–cysteine 143, cysteine 190–cysteine 221, cysteine 194–cysteine 214, cysteine 203–cysteine 235, cysteine 275–cysteine 288, cysteine 283–cysteine 299, and cysteine 301–cysteine 310. Positions 271-311 constitute an EGF-like domain; sequence NHMPCPENLNGYCIHGKCEFIYSTQKASCRCESGYTGQHCE. The chain crosses the membrane as a helical span at residues 331–351; sequence LIAAIIGAVQIAIIVAIVMCI. Topologically, residues 352–380 are cytoplasmic; it reads TRKCPKNNRGRRQKQNLGHFTSDTSSRMV. A disordered region spans residues 359 to 380; the sequence is NRGRRQKQNLGHFTSDTSSRMV. Over residues 366–380 the composition is skewed to polar residues; the sequence is QNLGHFTSDTSSRMV.

The protein belongs to the tomoregulin family. As to quaternary structure, may interact with ST14. In terms of tissue distribution, expressed predominantly in brain, and at lower levels in heart, placenta and skeletal muscle. Down-regulated in brain tumors as compared to control brain tissues.

The protein resides in the cell membrane. In terms of biological role, neuron-specific restriction factor that prevents herpes simplex virus 1 (HHV-1) infection in the brain by blocking viral entry. Also able to restrict herpes simplex virus 2 (HHV-2) infection, although to a lesser extent. Acts by preventing the association between the viral glycoprotein D (gD) and its cell surface receptor NECTIN1, thereby inhibiting fusion of the virus and the cell membrane. Also able to prevent the association between the viral glycoprotein B (gB) and MYH9/NMMHC-IIA and MYH10/NMMHC-IIB receptors. May be a tumor suppressor in brain cancers. This is Tomoregulin-1 from Homo sapiens (Human).